We begin with the raw amino-acid sequence, 439 residues long: Glucan 1,3-beta-glucosidase (439 aa).

Residues 1 to 18 form the signal peptide; sequence MLLSLLFLLSTFAFGALT. Glu227 serves as the catalytic Proton donor. Cystine bridges form between Cys311–Cys437 and Cys336–Cys366. Glu328 serves as the catalytic Nucleophile.

Belongs to the glycosyl hydrolase 5 (cellulase A) family.

It localises to the secreted. It carries out the reaction Successive hydrolysis of beta-D-glucose units from the non-reducing ends of (1-&gt;3)-beta-D-glucans, releasing alpha-glucose.. Its function is as follows. Beta-glucanases participate in the metabolism of beta-glucan, the main structural component of the cell wall. It could also function biosynthetically as a transglycosylase. This Lachancea kluyveri (strain ATCC 58438 / CBS 3082 / BCRC 21498 / NBRC 1685 / JCM 7257 / NCYC 543 / NRRL Y-12651) (Yeast) protein is Glucan 1,3-beta-glucosidase (EXG1).